The sequence spans 305 residues: U6 small nuclear RNA (adenine-(43)-N(6))-methyltransferase (305 aa).

Residues Arg-85, Gly-110, Glu-133, Ser-164, and Asn-186 each coordinate S-adenosyl-L-methionine. The segment at 194 to 217 is disordered; sequence SPNPFGGNTRNPQRRPAPNNVRTG.

The protein belongs to the methyltransferase superfamily. METTL16/RlmF family.

The enzyme catalyses adenosine in U6 snRNA + S-adenosyl-L-methionine = N(6)-methyladenosine in U6 snRNA + S-adenosyl-L-homocysteine + H(+). RNA N6-methyltransferase that mediates N6-methylation of adenine of U6 small nuclear RNA (U6 snRNA). The sequence is that of U6 small nuclear RNA (adenine-(43)-N(6))-methyltransferase from Drosophila pseudoobscura pseudoobscura (Fruit fly).